Consider the following 34-residue polypeptide: Conotoxin Cl6d (34 aa).

Disulfide bonds link Cys4–Cys19, Cys12–Cys29, and Cys18–Cys33. A 4-hydroxyproline mark is found at Pro14 and Pro21.

Expressed by the venom duct.

The protein localises to the secreted. This Californiconus californicus (California cone) protein is Conotoxin Cl6d.